Here is a 396-residue protein sequence, read N- to C-terminus: MGAPSALPLLLLLACSWAPGGANLSQDDSQPWTSDETVVAGGTVVLKCQVKDHEDSSLQWSNPAQQTLYFGEKRALRDNRIQLVSSTPHELSISISNVALADEGEYTCSIFTMPVRTAKSLVTVLGIPQKPIITGYKSSLREKETATLNCQSSGSKPAAQLAWRKGDQELHGDQTRIQEDPNGKTFTVSSSVSFQVTRDDDGANVVCSVNHESLKGADRSTSQRIEVLYTPTAMIRPEPAHPREGQKLLLHCEGRGNPVPQQYVWVKEGSEPPLKMTQESALIFPFLNKSDSGTYGCTATSNMGSYTAYFTLNVNDPSPVPSSSSTYHAIIGGIVAFIVFLLLILLIFLGHYLIRHKGTYLTHEAKGSDDAPDADTAIINAEGGQSGGDDKKEYFI.

The signal sequence occupies residues 1-22 (MGAPSALPLLLLLACSWAPGGA). The Ig-like V-type domain maps to 23-124 (NLSQDDSQPW…VRTAKSLVTV (102 aa)). At 23–328 (NLSQDDSQPW…PVPSSSSTYH (306 aa)) the chain is on the extracellular side. 3 cysteine pairs are disulfide-bonded: cysteine 48/cysteine 108, cysteine 150/cysteine 207, and cysteine 252/cysteine 297. Ig-like C2-type domains are found at residues 128–226 (PQKP…QRIE) and 231–313 (PTAM…FTLN). An N-linked (GlcNAc...) asparagine glycan is attached at asparagine 288. The helical transmembrane segment at 329-349 (AIIGGIVAFIVFLLLILLIFL) threads the bilayer. The Cytoplasmic segment spans residues 350 to 396 (GHYLIRHKGTYLTHEAKGSDDAPDADTAIINAEGGQSGGDDKKEYFI). The tract at residues 365-396 (AKGSDDAPDADTAIINAEGGQSGGDDKKEYFI) is disordered. The residue at position 386 (serine 386) is a Phosphoserine.

This sequence belongs to the nectin family. Homodimer. Can form trans-heterodimers with NECTIN3. Interacts with EPB41L1, DLG3, PALS2 and CASK.

It localises to the cell membrane. The protein resides in the cell junction. In terms of biological role, involved in cell-cell adhesion. Has both calcium-independent homophilic cell-cell adhesion activity and calcium-independent heterophilic cell-cell adhesion activity with IGSF4, NECTIN1 and NECTIN3. Interaction with EPB41L1 may regulate structure or function of cell-cell junctions. The sequence is that of Cell adhesion molecule 3 (Cadm3) from Rattus norvegicus (Rat).